The following is a 139-amino-acid chain: Holo-[acyl-carrier-protein] synthase (139 aa).

Aspartate 8 and glutamate 61 together coordinate Mg(2+).

This sequence belongs to the P-Pant transferase superfamily. AcpS family. Requires Mg(2+) as cofactor.

It localises to the cytoplasm. The catalysed reaction is apo-[ACP] + CoA = holo-[ACP] + adenosine 3',5'-bisphosphate + H(+). In terms of biological role, transfers the 4'-phosphopantetheine moiety from coenzyme A to a Ser of acyl-carrier-protein. This chain is Holo-[acyl-carrier-protein] synthase, found in Rhodopseudomonas palustris (strain BisB5).